We begin with the raw amino-acid sequence, 227 residues long: MKVSYHGHSVVKIEANGKVILIDPFLTGNPKTDLKAEDVKVDAILLSHGHGDHVGDTVELAKKNNAVVVAPFELATFLSWQGVNTHPMHIGGSHEFDFGKVKFTQAFHGSSYIDEANKTITYTGMPAGILFTAEEKTVYHAGDTALFSDMKLIGELNKVDLAFLPIGDNFTMGPEDAVLAAKWINSKTVVPMHYNTFPVIEQDPYQFVEKLQNCTGKVLEAGESITL.

It belongs to the UPF0173 family.

The sequence is that of UPF0173 metal-dependent hydrolase BCG9842_B0515 from Bacillus cereus (strain G9842).